Here is a 130-residue protein sequence, read N- to C-terminus: Protein YchQ (130 aa).

At 1-9 (MTSFSTLLS) the chain is on the periplasmic side. The chain crosses the membrane as a helical span at residues 10–28 (VHLISIALSVGLLTLRFWL). The Cytoplasmic segment spans residues 29–39 (RYQKHPQAFAR). The helical transmembrane segment at 40 to 59 (WTRIVPPVVDTLLLLSGIAL) threads the bilayer. At 60–73 (MAKAHILPFSGQAQ) the chain is on the periplasmic side. Residues 74 to 93 (WLTEKLFGVIIYIVLGFIAL) form a helical membrane-spanning segment. Over 94–104 (DYRRMHSQQAR) the chain is Cytoplasmic. The helical transmembrane segment at 105-124 (IIAFPLALVVLYIIIKLATT) threads the bilayer. The Periplasmic portion of the chain corresponds to 125-130 (KVPLLG).

The protein belongs to the SirB2 family.

Its subcellular location is the cell inner membrane. The chain is Protein YchQ (ychQ) from Escherichia coli (strain K12).